The following is a 475-amino-acid chain: Tubulin gamma-1 chain (475 aa).

142–148 serves as a coordination point for GTP; it reads AGGTGSG. Residues 453-475 form a disordered region; it reads VKRGNGPVDSKSEDSRSVTSAGS.

The protein belongs to the tubulin family. As to quaternary structure, interacts with Ote.

The protein localises to the cytoplasm. Its subcellular location is the cytoskeleton. It is found in the microtubule organizing center. The protein resides in the centrosome. It localises to the perinuclear region. In terms of biological role, tubulin is the major constituent of microtubules. The gamma chain is found at microtubule organizing centers (MTOC) such as the spindle poles or the centrosome, suggesting that it is involved in the minus-end nucleation of microtubule assembly. This chain is Tubulin gamma-1 chain (gammaTub23C), found in Drosophila melanogaster (Fruit fly).